We begin with the raw amino-acid sequence, 591 residues long: Myelin expression factor 2 (591 aa).

A disordered region spans residues 1–92; that stretch reads MADADKSEAA…GEKKGPNRNR (92 aa). Basic and acidic residues predominate over residues 22 to 36; the sequence is EPRRDTHPGEPEKPP. K44 participates in a covalent cross-link: Glycyl lysine isopeptide (Lys-Gly) (interchain with G-Cter in SUMO2). Composition is skewed to basic and acidic residues over residues 45–63 and 74–87; these read MEND…EKST and YSKD…EKKG. 2 consecutive RRM domains span residues 91–169 and 224–301; these read NRVF…EDPD and STIF…MDDK. Residues R397 and R417 each carry the omega-N-methylarginine modification. A Phosphoserine modification is found at S422. Residues 514–590 enclose the RRM 3 domain; it reads NQIFVRNLPF…REIDVRLDRN (77 aa).

Monomer. As to expression, highly expressed in the brain.

It is found in the nucleus. Its function is as follows. Transcriptional repressor of the myelin basic protein gene (MBP). Binds to the proximal MB1 element 5'-TTGTCC-3' of the MBP promoter. Its binding to MB1 and function are inhibited by PURA. The sequence is that of Myelin expression factor 2 (Myef2) from Mus musculus (Mouse).